The following is a 376-amino-acid chain: Protein RecA (376 aa).

65–72 (GPESSGKT) provides a ligand contact to ATP. A disordered region spans residues 316–376 (EHDEIFTSVR…GDDLSDDDIY (61 aa)). Basic and acidic residues predominate over residues 331-350 (GEKKDSDEDPGDNKKSKDSA). A compositionally biased stretch (acidic residues) spans 366 to 376 (PGDDLSDDDIY).

Belongs to the RecA family.

It localises to the cytoplasm. Functionally, can catalyze the hydrolysis of ATP in the presence of single-stranded DNA, the ATP-dependent uptake of single-stranded DNA by duplex DNA, and the ATP-dependent hybridization of homologous single-stranded DNAs. It interacts with LexA causing its activation and leading to its autocatalytic cleavage. This Oenococcus oeni (strain ATCC BAA-331 / PSU-1) protein is Protein RecA.